The primary structure comprises 392 residues: Serpin B11 (392 aa).

An RCL region spans residues glutamate 341–phenylalanine 365.

The protein belongs to the serpin family. Ov-serpin subfamily. In terms of tissue distribution, detected in a restricted number of tissues, including lung, placenta, prostate, and tonsil.

It localises to the cytoplasm. Functionally, has no serine protease inhibitory activity, probably due to variants in the scaffold impairing conformational change. In Homo sapiens (Human), this protein is Serpin B11 (SERPINB11).